We begin with the raw amino-acid sequence, 526 residues long: Tyrosine 2,3-aminomutase (526 aa).

Residue Tyr-41 is the Proton donor/acceptor of the active site. His-71 lines the substrate pocket. The 5-imidazolinone (Ala-Gly) cross-link spans 130–132; it reads ASG. Ser-131 is subject to 2,3-didehydroalanine (Ser). 2 residues coordinate substrate: Asn-183 and Arg-288.

This sequence belongs to the TAL/TAM family. In terms of assembly, homotetramer; dimer of dimers. Contains an active site 4-methylidene-imidazol-5-one (MIO), which is formed autocatalytically by cyclization and dehydration of residues Ala-Ser-Gly.

It carries out the reaction L-tyrosine = 3-amino-3-(4-hydroxyphenyl)propanoate. The enzyme catalyses L-tyrosine = (E)-4-coumarate + NH4(+). Functionally, has aminomutase and, to a much lesser extent, ammonia-lyase activity. Primarily, catalyzes the rearrangement of L-tyrosine to S-beta-tyrosine, which is probably incorporated into secondary metabolite myxovalargin. The aminomutase activity exclusively produces S-beta-tyrosine. The polypeptide is Tyrosine 2,3-aminomutase (Myxococcus sp. (strain Mx-B0)).